We begin with the raw amino-acid sequence, 1072 residues long: 5'-3' exoribonuclease 2 (1072 aa).

The stretch at Arg118–Asn144 forms a coiled coil. The CCHC-type zinc finger occupies Arg269–Gly286. A compositionally biased stretch (basic and acidic residues) spans Lys414–Gln435. 4 disordered regions span residues Lys414 to Phe459, Gln509 to Thr577, Ala865 to Gly911, and Gly943 to Arg1072. The segment covering Ala518–Ala543 has biased composition (low complexity). A compositionally biased stretch (gly residues) spans Gly892–Gly911. A compositionally biased stretch (pro residues) spans Gly955–Gly967. 3 stretches are compositionally biased toward gly residues: residues Ala983 to Arg1000, Tyr1025 to Gly1036, and Gly1056 to Arg1072.

This sequence belongs to the 5'-3' exonuclease family. XRN2/RAT1 subfamily. As to quaternary structure, interacts with rai1; the interaction is direct, stabilizes exr-1 protein structure and may stimulate its exoribonuclease activity. The interaction also stimulates rai1 pyrophosphohydrolase activity, probably by recruiting it to mRNA substrates.

Its subcellular location is the nucleus. Its function is as follows. Possesses 5'-&gt;3' exoribonuclease activity. Required for the processing of nuclear mRNA and rRNA precursors. May promote the termination of transcription by RNA polymerase II. Essential for vegetative cell growth and chromosome segregation. The chain is 5'-3' exoribonuclease 2 (exr-1) from Neurospora crassa (strain ATCC 24698 / 74-OR23-1A / CBS 708.71 / DSM 1257 / FGSC 987).